The sequence spans 474 residues: Adenosylhomocysteinase (474 aa).

The substrate site is built by Thr61, Asp136, and Glu196. Residue 197-199 (TTT) coordinates NAD(+). Substrate is bound by residues Lys226 and Asp230. Residues Asn231, 260–265 (GYGDVG), Glu283, Asn318, 339–341 (IGH), and Asn384 contribute to the NAD(+) site.

The protein belongs to the adenosylhomocysteinase family. Requires NAD(+) as cofactor.

The protein resides in the cytoplasm. It carries out the reaction S-adenosyl-L-homocysteine + H2O = L-homocysteine + adenosine. Its pathway is amino-acid biosynthesis; L-homocysteine biosynthesis; L-homocysteine from S-adenosyl-L-homocysteine: step 1/1. May play a key role in the regulation of the intracellular concentration of adenosylhomocysteine. This chain is Adenosylhomocysteinase, found in Ralstonia pickettii (strain 12J).